Reading from the N-terminus, the 428-residue chain is MKIYKLQTPVNAILENIAADKSISHRFAIFSLLTQEENKAQNYLLAQDTLNTLEIIKNLGAKIEQKDSCVKIIPPKEILSPNCILDCGNSGTAMRLMIGFLAGISGFFVLSGDKYLNNRPMRRISKPLTQIGARIYGRNEANLAPLCIEGQNLKAFNYKSEISSAQVKTAMILSAFRANNVCAFSEISLSRNHSENMLKAMKAPIRVSNDGLSLEISPLKKPLKAQNIIIPNDPSSAFYFALAAIILPKSQIILKNILLNPTRIEAYKILQKMGAKLEMTITQNDFETIGEIRVESSKLNGIEVKDNIAWLIDEAPALAIAFALAKGKSSLINAKELRVKESDRIAVMVENLKLCGVEARELDDGFEIEGGCELKSSKIKSYGDHRIAMSFAILGLLCGIEIDDSDCIKTSFPNFIEILSNLGARIDY.

Residues lysine 21, serine 22, and arginine 26 each coordinate 3-phosphoshikimate. Residue lysine 21 participates in phosphoenolpyruvate binding. 2 residues coordinate phosphoenolpyruvate: glycine 91 and arginine 119. 3-phosphoshikimate is bound by residues serine 164, glutamine 166, aspartate 313, and lysine 340. Glutamine 166 is a phosphoenolpyruvate binding site. The active-site Proton acceptor is the aspartate 313. 2 residues coordinate phosphoenolpyruvate: arginine 344 and arginine 386.

It belongs to the EPSP synthase family. Monomer.

The protein localises to the cytoplasm. The catalysed reaction is 3-phosphoshikimate + phosphoenolpyruvate = 5-O-(1-carboxyvinyl)-3-phosphoshikimate + phosphate. Its pathway is metabolic intermediate biosynthesis; chorismate biosynthesis; chorismate from D-erythrose 4-phosphate and phosphoenolpyruvate: step 6/7. In terms of biological role, catalyzes the transfer of the enolpyruvyl moiety of phosphoenolpyruvate (PEP) to the 5-hydroxyl of shikimate-3-phosphate (S3P) to produce enolpyruvyl shikimate-3-phosphate and inorganic phosphate. This is 3-phosphoshikimate 1-carboxyvinyltransferase from Campylobacter jejuni subsp. jejuni serotype O:6 (strain 81116 / NCTC 11828).